Here is a 174-residue protein sequence, read N- to C-terminus: Transcriptional repressor NrdR (174 aa).

Residues 3–34 fold into a zinc finger; sequence CPFCQHNDTRVIDSRVSEDGTTIRRRRECEAC. The ATP-cone domain occupies 49-139; that stretch reads PTVVKSDGGR…VYRSFQDVAD (91 aa).

This sequence belongs to the NrdR family. Zn(2+) serves as cofactor.

Its function is as follows. Negatively regulates transcription of bacterial ribonucleotide reductase nrd genes and operons by binding to NrdR-boxes. The sequence is that of Transcriptional repressor NrdR from Xanthomonas axonopodis pv. citri (strain 306).